A 919-amino-acid polypeptide reads, in one-letter code: UPF0182 protein SUN_1015 (919 aa).

The next 7 membrane-spanning stretches (helical) occupy residues 8 to 28, 51 to 71, 102 to 122, 158 to 178, 207 to 227, 246 to 266, and 274 to 294; these read IIIT…VDYY, ILSF…HIHF, AVAW…GSYA, VYQF…IGVL, LTAF…YNIL, IPAY…LFFY, and VIVS…WIYP.

The protein belongs to the UPF0182 family.

Its subcellular location is the cell membrane. This chain is UPF0182 protein SUN_1015, found in Sulfurovum sp. (strain NBC37-1).